The sequence spans 100 residues: Putative pterin-4-alpha-carbinolamine dehydratase (100 aa).

The protein belongs to the pterin-4-alpha-carbinolamine dehydratase family.

The enzyme catalyses (4aS,6R)-4a-hydroxy-L-erythro-5,6,7,8-tetrahydrobiopterin = (6R)-L-erythro-6,7-dihydrobiopterin + H2O. The polypeptide is Putative pterin-4-alpha-carbinolamine dehydratase (Afipia carboxidovorans (strain ATCC 49405 / DSM 1227 / KCTC 32145 / OM5) (Oligotropha carboxidovorans)).